The chain runs to 82 residues: Large ribosomal subunit protein bL27 (82 aa).

Residues 1–21 (MAHKKGASSSRNGRDSNAKRL) are disordered.

Belongs to the bacterial ribosomal protein bL27 family.

The protein is Large ribosomal subunit protein bL27 of Tropheryma whipplei (strain TW08/27) (Whipple's bacillus).